The primary structure comprises 514 residues: MSQSHIGGVSRREFLAKVAAGGAGALMSFAGPVIEKAYGAGPCSGHLTDIEHFVFFMQENRSFDHYFGTLSGTDGFNTVSPLFQQKGWNPMTQALDATGVTMPYRFDTTRGPFLDGACVNDPDHSWVAMHESWNGGVNDNWLPAQAKTRSAAHTPTVMGYYTRQDIPIHYLLADAFTVCDRYFCSVLGPTLPNRLYWLSATIDPDGQNGGPELQSPTFQPVRRFGWRIMPQNLSDAGVSWKVYRNKTLGPISSVLTYGSLVTSFKQSADPRSDLVRFGVAPSYPASFAADVLANRLPRVSWVIPNVLESEHPAVPAAAGAFAIVNILRILLANPAVWEKTALIVSYDENGGFFDHVVPATAPAGTPGEYVTVPDIDQVPGSGGIRGPIGLGFRVPCFVISPYSRGPQMVHDTFDHTSQLRLLETRFGVPVPNLTAWRRSVTGDMTSTFNFAVPPNSSWPNLDYPGLHALSTVPQCVPNAALGTINRGIPYRVPDPQIMPTQETTPTRGIPSGPC.

A signal peptide (tat-type signal) is located at residues M1–A37. A disordered region spans residues V492–C514.

It belongs to the bacterial phospholipase C family. Predicted to be exported by the Tat system. The position of the signal peptide cleavage has not been experimentally proven.

The protein resides in the secreted. It localises to the cell wall. It carries out the reaction a 1,2-diacyl-sn-glycero-3-phosphocholine + H2O = phosphocholine + a 1,2-diacyl-sn-glycerol + H(+). Functionally, involved in virulence. Induces cytotoxic effects on mouse macrophage cell lines, via direct or indirect enzymatic hydrolysis of cell membrane phospholipids. Hydrolyzes phosphatidylcholine. This chain is Phospholipase C D, found in Mycobacterium tuberculosis (strain CDC 1551 / Oshkosh).